A 476-amino-acid chain; its full sequence is Sulfate adenylyltransferase subunit 1 (476 aa).

The tr-type G domain occupies 24–239; sequence KSMLRFLTCG…VLENVDIDQK (216 aa). Positions 33 to 40 are G1; the sequence is GSVDDGKS. A GTP-binding site is contributed by 33–40; that stretch reads GSVDDGKS. Positions 91–95 are G2; the sequence is GITID. Residues 112-115 form a G3 region; sequence DTPG. Residues 112–116 and 167–170 contribute to the GTP site; these read DTPGH and NKMD. A G4 region spans residues 167–170; that stretch reads NKMD. The tract at residues 205 to 207 is G5; that stretch reads SAL.

It belongs to the TRAFAC class translation factor GTPase superfamily. Classic translation factor GTPase family. CysN/NodQ subfamily. As to quaternary structure, heterodimer composed of CysD, the smaller subunit, and CysN.

It carries out the reaction sulfate + ATP + H(+) = adenosine 5'-phosphosulfate + diphosphate. It participates in sulfur metabolism; hydrogen sulfide biosynthesis; sulfite from sulfate: step 1/3. With CysD forms the ATP sulfurylase (ATPS) that catalyzes the adenylation of sulfate producing adenosine 5'-phosphosulfate (APS) and diphosphate, the first enzymatic step in sulfur assimilation pathway. APS synthesis involves the formation of a high-energy phosphoric-sulfuric acid anhydride bond driven by GTP hydrolysis by CysN coupled to ATP hydrolysis by CysD. This is Sulfate adenylyltransferase subunit 1 from Vibrio atlanticus (strain LGP32) (Vibrio splendidus (strain Mel32)).